Reading from the N-terminus, the 97-residue chain is MNIRPLHDRVLVKRQEVELKSAGGIVLTGSAAGKSTRGTVVAVGKGRILDNGETKSLDVKIGDVVIFNEGYGAKTEKIDNEELLILTESDILAIVEE.

Belongs to the GroES chaperonin family. As to quaternary structure, heptamer of 7 subunits arranged in a ring. Interacts with the chaperonin GroEL.

The protein resides in the cytoplasm. Functionally, together with the chaperonin GroEL, plays an essential role in assisting protein folding. The GroEL-GroES system forms a nano-cage that allows encapsulation of the non-native substrate proteins and provides a physical environment optimized to promote and accelerate protein folding. GroES binds to the apical surface of the GroEL ring, thereby capping the opening of the GroEL channel. The protein is Co-chaperonin GroES of Buchnera aphidicola subsp. Pterocomma populeum.